The primary structure comprises 430 residues: Serine hydroxymethyltransferase (430 aa).

120–122 (GHI) serves as a coordination point for (6S)-5,6,7,8-tetrahydrofolate. The residue at position 226 (lysine 226) is an N6-(pyridoxal phosphate)lysine.

Belongs to the SHMT family. Homodimer. It depends on pyridoxal 5'-phosphate as a cofactor.

It localises to the cytoplasm. Its pathway is amino-acid biosynthesis; glycine biosynthesis; glycine from L-serine: step 1/1. Catalyzes the reversible interconversion of serine and glycine with a modified folate serving as the one-carbon carrier. Also exhibits a pteridine-independent aldolase activity toward beta-hydroxyamino acids, producing glycine and aldehydes, via a retro-aldol mechanism. In Pyrobaculum aerophilum (strain ATCC 51768 / DSM 7523 / JCM 9630 / CIP 104966 / NBRC 100827 / IM2), this protein is Serine hydroxymethyltransferase.